We begin with the raw amino-acid sequence, 457 residues long: Siroheme synthase (457 aa).

The precorrin-2 dehydrogenase /sirohydrochlorin ferrochelatase stretch occupies residues 1–204 (MDHLPIFCQL…NDQKAITETT (204 aa)). Residues 22 to 23 (DV) and 43 to 44 (LA) each bind NAD(+). Ser-128 bears the Phosphoserine mark. Residues 216 to 457 (GEVVLVGAGP…RDKLNWFSNH (242 aa)) form a uroporphyrinogen-III C-methyltransferase region. Pro-225 is a binding site for S-adenosyl-L-methionine. Asp-248 (proton acceptor) is an active-site residue. Lys-270 serves as the catalytic Proton donor. S-adenosyl-L-methionine is bound by residues 301–303 (GGD), Ile-306, 331–332 (TA), Met-382, and Gly-411.

The protein in the N-terminal section; belongs to the precorrin-2 dehydrogenase / sirohydrochlorin ferrochelatase family. This sequence in the C-terminal section; belongs to the precorrin methyltransferase family.

The catalysed reaction is uroporphyrinogen III + 2 S-adenosyl-L-methionine = precorrin-2 + 2 S-adenosyl-L-homocysteine + H(+). The enzyme catalyses precorrin-2 + NAD(+) = sirohydrochlorin + NADH + 2 H(+). It carries out the reaction siroheme + 2 H(+) = sirohydrochlorin + Fe(2+). It participates in cofactor biosynthesis; adenosylcobalamin biosynthesis; precorrin-2 from uroporphyrinogen III: step 1/1. The protein operates within cofactor biosynthesis; adenosylcobalamin biosynthesis; sirohydrochlorin from precorrin-2: step 1/1. Its pathway is porphyrin-containing compound metabolism; siroheme biosynthesis; precorrin-2 from uroporphyrinogen III: step 1/1. It functions in the pathway porphyrin-containing compound metabolism; siroheme biosynthesis; siroheme from sirohydrochlorin: step 1/1. It participates in porphyrin-containing compound metabolism; siroheme biosynthesis; sirohydrochlorin from precorrin-2: step 1/1. Functionally, multifunctional enzyme that catalyzes the SAM-dependent methylations of uroporphyrinogen III at position C-2 and C-7 to form precorrin-2 via precorrin-1. Then it catalyzes the NAD-dependent ring dehydrogenation of precorrin-2 to yield sirohydrochlorin. Finally, it catalyzes the ferrochelation of sirohydrochlorin to yield siroheme. This Escherichia coli O45:K1 (strain S88 / ExPEC) protein is Siroheme synthase.